Consider the following 116-residue polypeptide: uncharacterized protein (116 aa).

Residues 6 to 83 (ATVHVGNLAP…RCIRVSPANF (78 aa)) form the RRM domain.

It is found in the cytoplasm. It localises to the nucleus. This is an uncharacterized protein from Schizosaccharomyces pombe (strain 972 / ATCC 24843) (Fission yeast).